A 157-amino-acid polypeptide reads, in one-letter code: MPRRRVVAKREILPDPKHGSQILAKFINHVMVSGKKSVAESIVYNALNTVAARAKTEEPMAIFEKALESIQPMVEVKSRRVGGATYQVPVEVRPARRAALSMRWLVDASRKRGEKSMALRLAGEILDAAENKGSAVKKREDVHRMAEANKAFSHYRF.

This sequence belongs to the universal ribosomal protein uS7 family. In terms of assembly, part of the 30S ribosomal subunit. Contacts proteins S9 and S11.

In terms of biological role, one of the primary rRNA binding proteins, it binds directly to 16S rRNA where it nucleates assembly of the head domain of the 30S subunit. Is located at the subunit interface close to the decoding center, probably blocks exit of the E-site tRNA. The protein is Small ribosomal subunit protein uS7 of Marinomonas sp. (strain MWYL1).